The following is a 956-amino-acid chain: Thrombospondin-3 (956 aa).

An N-terminal signal peptide occupies residues 1 to 21 (MEKPELWGVLALLLLCSYTCG). The Laminin G-like domain maps to 22 to 193 (SQDLQVIDLL…VESMKIILGG (172 aa)). 21 disulfide bridges follow: cysteine 278-cysteine 289, cysteine 283-cysteine 300, cysteine 303-cysteine 314, cysteine 320-cysteine 332, cysteine 326-cysteine 341, cysteine 344-cysteine 368, cysteine 374-cysteine 388, cysteine 382-cysteine 397, cysteine 400-cysteine 412, cysteine 418-cysteine 432, cysteine 426-cysteine 442, cysteine 444-cysteine 455, cysteine 471-cysteine 478, cysteine 483-cysteine 503, cysteine 519-cysteine 539, cysteine 542-cysteine 562, cysteine 578-cysteine 598, cysteine 601-cysteine 621, cysteine 639-cysteine 659, cysteine 679-cysteine 699, and cysteine 715-cysteine 936. An N-linked (GlcNAc...) asparagine glycan is attached at asparagine 310. The region spanning 316-354 (DINECAHADPCFPGSSCINTMPGFHCEACPPGYKGTRVS) is the EGF-like 1; calcium-binding domain. Positions 370–410 (DIDECNDGNNGGCDPNSICTNTVGSFKCGPCRLGFLGNQSQ) constitute an EGF-like 2; calcium-binding domain. Asparagine 407 carries N-linked (GlcNAc...) asparagine glycosylation. The 43-residue stretch at 414 to 456 (PARTCHSPAHSPCHIHAHCLFERNGAVSCQCNVGWAGNGNVCG) folds into the EGF-like 3 domain. TSP type-3 repeat units lie at residues 457-491 (PDTD…NSGQ), 492-527 (EDAD…NKDQ), 528-550 (QNSD…NNDQ), 551-586 (KDTD…NPLQ), 587-609 (TDRD…NPTQ), 610-647 (TDAD…NSSQ), 648-687 (LDSD…NPNQ), and 688-723 (KDSD…EVTL). Disordered regions lie at residues 518-537 (NCRL…SFGD) and 546-699 (PNND…GDVC). The span at 555-568 (GNGEGDACDNDVDG) shows a compositional bias: acidic residues. Positions 612 to 628 (ADSDLVGDVCDTNEDSD) are enriched in acidic residues. Asparagine 644 carries N-linked (GlcNAc...) asparagine glycosylation. The span at 650-667 (SDNDGLGDECDGDDDNDG) shows a compositional bias: acidic residues. The 215-residue stretch at 727-941 (RAYQTVILDP…LQYRCNDTVP (215 aa)) folds into the TSP C-terminal domain. An N-linked (GlcNAc...) asparagine glycan is attached at asparagine 937.

Belongs to the thrombospondin family. In terms of assembly, oligomer; disulfide-linked. Brain, lung and cartilage.

Functionally, adhesive glycoprotein that mediates cell-to-cell and cell-to-matrix interactions. Can bind to fibrinogen, fibronectin, laminin and type V collagen. This is Thrombospondin-3 (Thbs3) from Mus musculus (Mouse).